We begin with the raw amino-acid sequence, 1403 residues long: DNA-directed RNA polymerase subunit beta' (1403 aa).

Residues Cys-70, Cys-72, Cys-85, and Cys-88 each coordinate Zn(2+). Mg(2+)-binding residues include Asp-461, Asp-463, and Asp-465. Zn(2+) contacts are provided by Cys-816, Cys-890, Cys-897, and Cys-900.

This sequence belongs to the RNA polymerase beta' chain family. In terms of assembly, the RNAP catalytic core consists of 2 alpha, 1 beta, 1 beta' and 1 omega subunit. When a sigma factor is associated with the core the holoenzyme is formed, which can initiate transcription. Mg(2+) serves as cofactor. The cofactor is Zn(2+).

The catalysed reaction is RNA(n) + a ribonucleoside 5'-triphosphate = RNA(n+1) + diphosphate. In terms of biological role, DNA-dependent RNA polymerase catalyzes the transcription of DNA into RNA using the four ribonucleoside triphosphates as substrates. The protein is DNA-directed RNA polymerase subunit beta' of Dechloromonas aromatica (strain RCB).